We begin with the raw amino-acid sequence, 83 residues long: Tetracenomycin polyketide synthase acyl carrier protein (83 aa).

The region spanning 3–83 is the Carrier domain; sequence QIGLPRLVEI…VNTETAGEVA (81 aa). At Ser41 the chain carries O-(pantetheine 4'-phosphoryl)serine.

In terms of assembly, the tetracenomycin polyketide synthase (TCM PKS) is composed of a ketosynthase complex (TcmKL), an acyl carrier protein (TcmM), a cyclase (TcmN) and a probable second cyclase (TcmJ). Requires pantetheine 4'-phosphate as cofactor. In terms of processing, 4'-phosphopantetheine is transferred from CoA to a specific serine of apo-ACP.

It carries out the reaction 10 malonyl-CoA + 8 H(+) = tetracenomycin F2 + 10 CO2 + 10 CoA + 2 H2O. It functions in the pathway antibiotic biosynthesis; tetracenomycin C biosynthesis. Its function is as follows. Involved in the biosynthesis of tetracenomycin C (TCM C). Part of a type II polyketide synthase (PKS) that catalyzes the synthesis of tetracenomycin F2 (TCM F2), a precursor of TCM C, from malonyl-CoA. TcmM is an acyl carrier protein that serves as an acceptor of malonate from malonyl-CoA and acts as the tether for the substrates and intermediates of polyketide assembly. The malonyl CoA-acyl carrier protein transacylase FabD (MCT) is required to catalyze the transacylation between malonyl-CoA and TcmM, although a relatively slow spontaneous self-malonylation of TcmM also occurs in a reaction without the MCT. This Streptomyces glaucescens protein is Tetracenomycin polyketide synthase acyl carrier protein.